The chain runs to 684 residues: Glycine--tRNA ligase beta subunit (684 aa).

The protein belongs to the class-II aminoacyl-tRNA synthetase family. In terms of assembly, tetramer of two alpha and two beta subunits.

It localises to the cytoplasm. The enzyme catalyses tRNA(Gly) + glycine + ATP = glycyl-tRNA(Gly) + AMP + diphosphate. This Pseudomonas aeruginosa (strain ATCC 15692 / DSM 22644 / CIP 104116 / JCM 14847 / LMG 12228 / 1C / PRS 101 / PAO1) protein is Glycine--tRNA ligase beta subunit.